The primary structure comprises 350 residues: DNA polymerase IV (350 aa).

Residues 7 to 188 (IIHIDMDYFF…LPVKKLFGVG (182 aa)) form the UmuC domain. Positions 11 and 106 each coordinate Mg(2+). Glutamate 107 is a catalytic residue.

It belongs to the DNA polymerase type-Y family. As to quaternary structure, monomer. Requires Mg(2+) as cofactor.

The protein localises to the cytoplasm. It catalyses the reaction DNA(n) + a 2'-deoxyribonucleoside 5'-triphosphate = DNA(n+1) + diphosphate. Poorly processive, error-prone DNA polymerase involved in untargeted mutagenesis. Copies undamaged DNA at stalled replication forks, which arise in vivo from mismatched or misaligned primer ends. These misaligned primers can be extended by PolIV. Exhibits no 3'-5' exonuclease (proofreading) activity. May be involved in translesional synthesis, in conjunction with the beta clamp from PolIII. This is DNA polymerase IV from Francisella philomiragia subsp. philomiragia (strain ATCC 25017 / CCUG 19701 / FSC 153 / O#319-036).